A 312-amino-acid polypeptide reads, in one-letter code: MIRHFLADDDLTPSEQAAVLDEAARLKKDRYAARPLTGPRSVAVVFEKPSTRTRVSFEVAITELGGQPVVLDAVGSQLGRGEPIEDTARVLSRYVAAIVLRTFGHDRITTLARYATVPVVNALSDAYHPCQALADLLTIRERKGGLDGVRLAYVGDGNNVACSLLVAGAMAGLHVTVASPAGYQPPPAVVARAAEIGEQTGGRVEVVDDPRTAARNADVLYTDVWTSMGQEEETAARRRAFAGFTVDDDLLALAADDAIVLHCLPAHRGEEITASVLEGPQSAIFDQAENRLHTAKALLSFLLDAAGGRGIP.

Carbamoyl phosphate is bound by residues 50–53 (STRT), glutamine 77, arginine 101, and 128–131 (HPCQ). L-ornithine contacts are provided by residues asparagine 159, aspartate 223, and 227 to 228 (SM). Carbamoyl phosphate is bound by residues 263–264 (CL) and arginine 291.

The protein belongs to the aspartate/ornithine carbamoyltransferase superfamily. OTCase family.

Its subcellular location is the cytoplasm. It carries out the reaction carbamoyl phosphate + L-ornithine = L-citrulline + phosphate + H(+). It functions in the pathway amino-acid biosynthesis; L-arginine biosynthesis; L-arginine from L-ornithine and carbamoyl phosphate: step 1/3. In terms of biological role, reversibly catalyzes the transfer of the carbamoyl group from carbamoyl phosphate (CP) to the N(epsilon) atom of ornithine (ORN) to produce L-citrulline. This is Ornithine carbamoyltransferase from Acidothermus cellulolyticus (strain ATCC 43068 / DSM 8971 / 11B).